Here is a 577-residue protein sequence, read N- to C-terminus: Beta-fructofuranosidase, insoluble isoenzyme 1 (577 aa).

Positions 1 to 22 (MGTRLLALAPWLLLLLLQLAGA) are cleaved as a signal peptide. Aspartate 63 is a catalytic residue. Residues asparagine 158, asparagine 183, and asparagine 333 are each glycosylated (N-linked (GlcNAc...) asparagine).

Belongs to the glycosyl hydrolase 32 family. As to expression, expressed in roots, leaves and flowers. Weakly expressed in seeds.

The protein resides in the secreted. Its subcellular location is the extracellular space. It is found in the apoplast. The protein localises to the cell wall. The catalysed reaction is Hydrolysis of terminal non-reducing beta-D-fructofuranoside residues in beta-D-fructofuranosides.. Functionally, may play a role in sucrose partitioning during seed development and in stress response. The sequence is that of Beta-fructofuranosidase, insoluble isoenzyme 1 (CIN1) from Oryza sativa subsp. japonica (Rice).